The primary structure comprises 226 residues: Small ribosomal subunit protein uS3 (226 aa).

A KH type-2 domain is found at 39–107 (VRKFLNKELR…PAQINISEVR (69 aa)).

Belongs to the universal ribosomal protein uS3 family. Part of the 30S ribosomal subunit. Forms a tight complex with proteins S10 and S14.

Functionally, binds the lower part of the 30S subunit head. Binds mRNA in the 70S ribosome, positioning it for translation. In Idiomarina loihiensis (strain ATCC BAA-735 / DSM 15497 / L2-TR), this protein is Small ribosomal subunit protein uS3.